We begin with the raw amino-acid sequence, 396 residues long: Argininosuccinate synthase (396 aa).

ATP contacts are provided by residues Ala-10 to Ser-18 and Ala-37. Positions 88 and 93 each coordinate L-citrulline. Gly-118 lines the ATP pocket. Thr-120, Asn-124, and Asp-125 together coordinate L-aspartate. Asn-124 lines the L-citrulline pocket. L-citrulline-binding residues include Arg-128, Ser-176, Ser-185, Glu-261, and Tyr-273.

Belongs to the argininosuccinate synthase family. Type 1 subfamily. In terms of assembly, homotetramer.

It localises to the cytoplasm. The catalysed reaction is L-citrulline + L-aspartate + ATP = 2-(N(omega)-L-arginino)succinate + AMP + diphosphate + H(+). Its pathway is amino-acid biosynthesis; L-arginine biosynthesis; L-arginine from L-ornithine and carbamoyl phosphate: step 2/3. This chain is Argininosuccinate synthase, found in Nitratidesulfovibrio vulgaris (strain ATCC 29579 / DSM 644 / CCUG 34227 / NCIMB 8303 / VKM B-1760 / Hildenborough) (Desulfovibrio vulgaris).